The primary structure comprises 105 residues: UPF0148 protein PH0795 (105 aa).

It belongs to the UPF0148 family.

The sequence is that of UPF0148 protein PH0795 from Pyrococcus horikoshii (strain ATCC 700860 / DSM 12428 / JCM 9974 / NBRC 100139 / OT-3).